A 305-amino-acid chain; its full sequence is Popeye domain-containing protein 3 (305 aa).

Asparagine 4 carries an N-linked (GlcNAc...) asparagine glycan. 3 helical membrane-spanning segments follow: residues 34 to 54, 55 to 75, and 77 to 99; these read SILF…LYVF, SLLG…VCAA, and IFSW…TYQV. The tract at residues 273–305 is disordered; that stretch reads PETPPVPPPRRLQRRSSGRPRPGVPNCSSPRKQ. The N-linked (GlcNAc...) asparagine glycan is linked to asparagine 298.

It belongs to the popeye family. As to expression, expressed first preferentially in atrium and later also in the subepicardial compact layer of the ventricles.

Its subcellular location is the membrane. May play a role in the maintenance of heart function mediated, at least in part, through cAMP-binding. May play a role in the regulation of KCNK2-mediated current amplitude. This is Popeye domain-containing protein 3 (POPDC3) from Gallus gallus (Chicken).